Consider the following 212-residue polypeptide: ATP-dependent dethiobiotin synthetase BioD (212 aa).

13-18 (GIGKTV) contributes to the ATP binding site. T17 serves as a coordination point for Mg(2+). K33 is an active-site residue. Mg(2+) is bound at residue E100. ATP is bound by residues 100-103 (EGAG) and 184-186 (PHV).

Belongs to the dethiobiotin synthetase family. In terms of assembly, homodimer. It depends on Mg(2+) as a cofactor.

It localises to the cytoplasm. The enzyme catalyses (7R,8S)-7,8-diammoniononanoate + CO2 + ATP = (4R,5S)-dethiobiotin + ADP + phosphate + 3 H(+). It functions in the pathway cofactor biosynthesis; biotin biosynthesis; biotin from 7,8-diaminononanoate: step 1/2. In terms of biological role, catalyzes a mechanistically unusual reaction, the ATP-dependent insertion of CO2 between the N7 and N8 nitrogen atoms of 7,8-diaminopelargonic acid (DAPA, also called 7,8-diammoniononanoate) to form a ureido ring. This Nitrobacter hamburgensis (strain DSM 10229 / NCIMB 13809 / X14) protein is ATP-dependent dethiobiotin synthetase BioD.